Reading from the N-terminus, the 404-residue chain is Phosphoglycerate kinase (404 aa).

Residues 22–24 (DLN), R37, 60–63 (HLGR), R119, and R156 contribute to the substrate site. ATP is bound by residues K206, G302, E333, and 359–362 (GGDS).

The protein belongs to the phosphoglycerate kinase family. As to quaternary structure, monomer.

It localises to the cytoplasm. The enzyme catalyses (2R)-3-phosphoglycerate + ATP = (2R)-3-phospho-glyceroyl phosphate + ADP. The protein operates within carbohydrate degradation; glycolysis; pyruvate from D-glyceraldehyde 3-phosphate: step 2/5. The sequence is that of Phosphoglycerate kinase from Clavibacter michiganensis subsp. michiganensis (strain NCPPB 382).